Consider the following 315-residue polypeptide: Ribosomal RNA small subunit methyltransferase H (315 aa).

S-adenosyl-L-methionine is bound by residues Gly-33 to His-35, Asp-52, Phe-84, Asp-106, and Gln-113. The disordered stretch occupies residues Ser-295–Leu-315.

The protein belongs to the methyltransferase superfamily. RsmH family.

It is found in the cytoplasm. It carries out the reaction cytidine(1402) in 16S rRNA + S-adenosyl-L-methionine = N(4)-methylcytidine(1402) in 16S rRNA + S-adenosyl-L-homocysteine + H(+). Specifically methylates the N4 position of cytidine in position 1402 (C1402) of 16S rRNA. The chain is Ribosomal RNA small subunit methyltransferase H from Lactobacillus gasseri (strain ATCC 33323 / DSM 20243 / BCRC 14619 / CIP 102991 / JCM 1131 / KCTC 3163 / NCIMB 11718 / NCTC 13722 / AM63).